Consider the following 140-residue polypeptide: Putative pre-16S rRNA nuclease (140 aa).

The protein belongs to the YqgF nuclease family.

Its subcellular location is the cytoplasm. In terms of biological role, could be a nuclease involved in processing of the 5'-end of pre-16S rRNA. The sequence is that of Putative pre-16S rRNA nuclease from Chlorobium chlorochromatii (strain CaD3).